Reading from the N-terminus, the 332-residue chain is Glyceraldehyde-3-phosphate dehydrogenase 3 (332 aa).

NAD(+)-binding residues include Arg11, Ile12, and Asp33. Residues Lys46 and Lys63 each participate in a glycyl lysine isopeptide (Lys-Gly) (interchain with G-Cter in ubiquitin) cross-link. Thr120 is an NAD(+) binding site. Residue 149–151 (SCT) participates in D-glyceraldehyde 3-phosphate binding. Cys150 serves as the catalytic Nucleophile. Cys150 and Cys154 each carry cysteine persulfide. Lys160 participates in a covalent cross-link: Glycyl lysine isopeptide (Lys-Gly) (interchain with G-Cter in URM1). Residues Thr180, 209-210 (TG), and Arg232 contribute to the D-glyceraldehyde 3-phosphate site. The residue at position 302 (Ser302) is a Phosphoserine. Lys307 participates in a covalent cross-link: Glycyl lysine isopeptide (Lys-Gly) (interchain with G-Cter in URM1). Positions 314 and 318 each coordinate NAD(+).

Belongs to the glyceraldehyde-3-phosphate dehydrogenase family. As to quaternary structure, homotetramer. Conjugated to URM1, a ubiquitin-like protein, in response to oxidative stresses. The attachment of URM1 to lysine residues exclusively depends on the presence of a peroxidatic cysteine in the target protein, with low specificity for the particular residue, motif, or structural context at which urmylation can occur. The URM1-conjugation reaction is mechanistically and directly coupled to the process of cysteine persulfidation, transfering the sulfur atom of the URM1 thiocarboxyl group to redox-active cysteine residues in the target protein if it is exposed to oxidative conditions. In terms of processing, persulfidated on specific redox-active cysteine residues. Persulfidation (also called protein S-sulfhydration) may provide a molecular mechanism that enables cells to protect vulnerable cysteine residues from reactive oxygen species (ROS) under stress conditions.

The protein resides in the cytoplasm. It localises to the mitochondrion. It catalyses the reaction D-glyceraldehyde 3-phosphate + phosphate + NAD(+) = (2R)-3-phospho-glyceroyl phosphate + NADH + H(+). The catalysed reaction is NADH + H2O = (6R)-NADHX. The enzyme catalyses NADH + H2O = (6S)-NADHX. It carries out the reaction NADPH + H2O = (6R)-NADPHX. It catalyses the reaction NADPH + H2O = (6S)-NADPHX. It functions in the pathway carbohydrate degradation; glycolysis; pyruvate from D-glyceraldehyde 3-phosphate: step 1/5. Its function is as follows. Glyceraldehyde-3-phosphate dehydrogenase (GAPDH) involved in glycolysis and gluconeogenesis. Catalyzes the reaction of glyceraldehyde-3-phosphate to 1,3 bis-phosphoglycerate. The contribution of the TDH1, TDH2, and TDH3 to the total glyceraldehyde-3-phosphate dehydrogenase activity is 10-15, 25-30, and 50-60%, respectively. Functionally, as a side activity, catalyzes the hydration of the nicotinamide ring of NADH or NADPH at the C6 position to give the corresponding hydrates, NADHX and NADPHX, which exist as R and S epimers, that cannot act as electron donors or acceptors and inhibit several dehydrogenases, making them toxic. This chain is Glyceraldehyde-3-phosphate dehydrogenase 3, found in Saccharomyces cerevisiae (strain ATCC 204508 / S288c) (Baker's yeast).